Reading from the N-terminus, the 529-residue chain is Bifunctional purine biosynthesis protein PurH (529 aa).

One can recognise an MGS-like domain in the interval 1-148; it reads MNNARPIRRA…KNHKDTTIIV (148 aa).

Belongs to the PurH family.

The enzyme catalyses (6R)-10-formyltetrahydrofolate + 5-amino-1-(5-phospho-beta-D-ribosyl)imidazole-4-carboxamide = 5-formamido-1-(5-phospho-D-ribosyl)imidazole-4-carboxamide + (6S)-5,6,7,8-tetrahydrofolate. It carries out the reaction IMP + H2O = 5-formamido-1-(5-phospho-D-ribosyl)imidazole-4-carboxamide. It participates in purine metabolism; IMP biosynthesis via de novo pathway; 5-formamido-1-(5-phospho-D-ribosyl)imidazole-4-carboxamide from 5-amino-1-(5-phospho-D-ribosyl)imidazole-4-carboxamide (10-formyl THF route): step 1/1. It functions in the pathway purine metabolism; IMP biosynthesis via de novo pathway; IMP from 5-formamido-1-(5-phospho-D-ribosyl)imidazole-4-carboxamide: step 1/1. This chain is Bifunctional purine biosynthesis protein PurH, found in Shewanella pealeana (strain ATCC 700345 / ANG-SQ1).